The sequence spans 131 residues: Large-conductance mechanosensitive channel (131 aa).

A run of 2 helical transmembrane segments spans residues 21–41 (VGVI…ADVI) and 76–96 (GMFI…FLMI).

It belongs to the MscL family. As to quaternary structure, homopentamer.

It localises to the cell inner membrane. Its function is as follows. Channel that opens in response to stretch forces in the membrane lipid bilayer. May participate in the regulation of osmotic pressure changes within the cell. The polypeptide is Large-conductance mechanosensitive channel (Histophilus somni (strain 129Pt) (Haemophilus somnus)).